A 120-amino-acid chain; its full sequence is Flagellar protein FliT (120 aa).

The segment at 1-50 (MNDFISSLNNWQALYALSNTMLSLANSGQWDELIEQEVKYVTLVEAIARN) is required for homodimerization. The tract at residues 59–97 (FQEKARELLTKVLANEAALKIKLQARMEELRVLIEQNGN) is fliD binding.

The protein belongs to the FliT family. Homodimer. Interacts with FliD and FlhC.

It localises to the cytoplasm. The protein resides in the cytosol. Its function is as follows. Dual-function protein that regulates the transcription of class 2 flagellar operons and that also acts as an export chaperone for the filament-capping protein FliD. As a transcriptional regulator, acts as an anti-FlhDC factor; it directly binds FlhC, thus inhibiting the binding of the FlhC/FlhD complex to class 2 promoters, resulting in decreased expression of class 2 flagellar operons. As a chaperone, effects FliD transition to the membrane by preventing its premature polymerization, and by directing it to the export apparatus. The sequence is that of Flagellar protein FliT from Cronobacter sakazakii (strain ATCC BAA-894) (Enterobacter sakazakii).